We begin with the raw amino-acid sequence, 788 residues long: Ribosome biogenesis protein ERB1 (788 aa).

Residues 1–91 (MGDLKGSRKR…SKPIREKSKP (91 aa)) are disordered. Over residues 38–50 (LSDKSHDTEHSSD) the composition is skewed to basic and acidic residues. Residues 51–78 (SEIELVDDLSSDDGEEYEDEFDSDEIPS) show a composition bias toward acidic residues. Residues 80–91 (IESKPIREKSKP) show a composition bias toward basic and acidic residues. WD repeat units follow at residues 433–472 (GHSG…QIWS), 476–516 (SDEE…PEME), 613–651 (KGGG…LVKI), 654–699 (PGAR…RPYK), 703–742 (YHQK…DLLS), and 758–788 (TGEL…RLWT).

This sequence belongs to the WD repeat BOP1/ERB1 family. In terms of assembly, component of the NOP7 complex, composed of ERB1, NOP7 and YTM1. The complex is held together by ERB1, which interacts with NOP7 via its N-terminal domain and with YTM1 via a high-affinity interaction between the seven-bladed beta-propeller domains of the 2 proteins. The NOP7 complex associates with the 66S pre-ribosome.

Its subcellular location is the nucleus. The protein localises to the nucleolus. It is found in the nucleoplasm. In terms of biological role, component of the NOP7 complex, which is required for maturation of the 25S and 5.8S ribosomal RNAs and formation of the 60S ribosome. In Ajellomyces capsulatus (strain NAm1 / WU24) (Darling's disease fungus), this protein is Ribosome biogenesis protein ERB1.